A 397-amino-acid polypeptide reads, in one-letter code: MAKAKFERTKPHVNIGTIGHIDHGKTTLTAAITKVLHDAFPDLNEASAFDQIDKAPEERQRGITISIAHVEYQTETRHYAHVDCPGHADYIKNMITGAAQMDGAILVVAATDGPMPQTKEHVLLARQVGVPYIVVALNKADMVDDEEILELVELEVRELLSEYEFPGDDLPVVRVSALKALEGDKEWGQSVLNLMQAVDENIPEPERDVDKPFLMPIEDVFTITGRGTVVTGRIERGVLKVNETVDIIGIKTEKTTTTVTGIEMFRKLLDEGQAGENVGLLLRGIKREDVERGQVIIKPGSVTPHTEFEAQAYILSKDEGGRHTPFFNNYRPQFYFRTTDVTGVVTLPEGTEMVMPGDNTEMKVELIQPVAMEEGLKFAIREGGRTVGAGQVTKINK.

Residues Lys-10–Glu-206 enclose the tr-type G domain. A G1 region spans residues Gly-19 to Thr-26. GTP is bound at residue Gly-19–Thr-26. Thr-26 provides a ligand contact to Mg(2+). The G2 stretch occupies residues Gly-62 to Ser-66. Residues Asp-83–Gly-86 form a G3 region. GTP contacts are provided by residues Asp-83–His-87 and Asn-138–Asp-141. The interval Asn-138 to Asp-141 is G4. Residues Ser-176 to Leu-178 are G5. Thr-386 bears the Phosphothreonine mark.

This sequence belongs to the TRAFAC class translation factor GTPase superfamily. Classic translation factor GTPase family. EF-Tu/EF-1A subfamily. As to quaternary structure, monomer. In terms of processing, phosphorylated on threonine and serine.

It is found in the cytoplasm. The catalysed reaction is GTP + H2O = GDP + phosphate + H(+). GTP hydrolase that promotes the GTP-dependent binding of aminoacyl-tRNA to the A-site of ribosomes during protein biosynthesis. The sequence is that of Elongation factor Tu-1 from Streptomyces collinus.